Reading from the N-terminus, the 192-residue chain is 7-methyl-GTP pyrophosphatase (192 aa).

D69 (proton acceptor) is an active-site residue.

Belongs to the Maf family. YceF subfamily. A divalent metal cation is required as a cofactor.

The protein resides in the cytoplasm. It catalyses the reaction N(7)-methyl-GTP + H2O = N(7)-methyl-GMP + diphosphate + H(+). In terms of biological role, nucleoside triphosphate pyrophosphatase that hydrolyzes 7-methyl-GTP (m(7)GTP). May have a dual role in cell division arrest and in preventing the incorporation of modified nucleotides into cellular nucleic acids. The polypeptide is 7-methyl-GTP pyrophosphatase (Pseudomonas savastanoi pv. phaseolicola (strain 1448A / Race 6) (Pseudomonas syringae pv. phaseolicola (strain 1448A / Race 6))).